The chain runs to 301 residues: Structure-specific endonuclease subunit SLX1 (301 aa).

The GIY-YIG domain occupies 12 to 95 (AFYCCYLLRS…QHPYQTRFIK (84 aa)). An SLX1-type zinc finger spans residues 216–283 (CAICEKIVDY…IPTSGQCPNC (68 aa)).

The protein belongs to the SLX1 family. In terms of assembly, forms a heterodimer with SLX4. The cofactor is a divalent metal cation.

It localises to the nucleus. In terms of biological role, catalytic subunit of the SLX1-SLX4 structure-specific endonuclease that resolves DNA secondary structures generated during DNA repair and recombination. Has endonuclease activity towards branched DNA substrates, introducing single-strand cuts in duplex DNA close to junctions with ss-DNA. In Eremothecium gossypii (strain ATCC 10895 / CBS 109.51 / FGSC 9923 / NRRL Y-1056) (Yeast), this protein is Structure-specific endonuclease subunit SLX1.